The following is a 2032-amino-acid chain: Cytoskeleton-associated protein 5 (2032 aa).

2 TOG regions span residues 1–223 and 268–502; these read MGDD…KLPT and YELL…LIHG. Residue K48 is modified to N6-acetyllysine. 3 HEAT repeats span residues 159 to 197, 356 to 394, and 434 to 472; these read IILL…WIRD, GQYA…TTTL, and KSLL…VVGE. A disordered region spans residues 516–579; the sequence is PLPGRTAASG…GTKNKKGLET (64 aa). Residues 543-554 show a composition bias toward low complexity; sequence LKKAPAAKAGGP. The TOG 3 stretch occupies residues 588-817; the sequence is SIEVCEEKAS…EFEKMQGQSP (230 aa). Residues 750 to 788 form an HEAT 4 repeat; it reads GLNVKAFISNVKTALAATNPAVRTAAITLLGVMYLYVGP. The tract at residues 811–851 is disordered; sequence KMQGQSPPAPTRGISKHSTSGTDEGEDGDEPDDGSNDVVDL. Phosphoserine occurs at positions 816 and 845. The span at 833 to 845 shows a compositional bias: acidic residues; sequence DEGEDGDEPDDGS. TOG stretches follow at residues 853 to 1081 and 1193 to 1428; these read PRTE…VNMP and IEQL…KRPS. HEAT repeat units lie at residues 855 to 893, 936 to 974, and 1013 to 1051; these read TEIS…DAKF, KQHV…QTGM, and PTDL…HLGY. Residues 1077–1160 are disordered; it reads KVNMPAKPAP…KEDEDKSGPI (84 aa). HEAT repeat units follow at residues 1284-1322, 1324-1357, and 1361-1399; these read ENEA…VYPA, KMFP…SYGM, and QPTP…VHGD. The interval 1422 to 1443 is disordered; that stretch reads RSAKRPSAAPIKQVEEKPQRAQ. At S1469 the chain carries Phosphoserine. Residues 1801–1822 form a disordered region; it reads SMDQTGSKSDKETEKGASRIDE. Basic and acidic residues predominate over residues 1808–1822; the sequence is KSDKETEKGASRIDE. S1861 is modified (phosphoserine). Residues 1932 to 1957 form an interaction with TACC3 region; it reads PSVYLERLKILRQRCGLDNTKQDDRP. The tract at residues 1949 to 2032 is disordered; sequence DNTKQDDRPP…RLERIKSSRK (84 aa). The span at 1971 to 1983 shows a compositional bias: polar residues; sequence VASSTDMLHSKLS. Over residues 1984–1997 the composition is skewed to basic and acidic residues; sequence QLRESREQHQHSDL. Low complexity predominate over residues 2002-2014; it reads THSSGTVTSSSST. Residues 2018–2032 show a composition bias toward basic and acidic residues; the sequence is DDLKKRLERIKSSRK.

The protein belongs to the TOG/XMAP215 family. As to quaternary structure, interacts with TACC1. Interacts with SLAIN2 and SLAIN1. Interacts with HNRNPA2B1. Interacts with TACC3 independently of clathrin. Interacts with TACC3 and clathrin forming the TACC3/ch-TOG/clathrin complex located at spindle inter-microtubules bridges. Interacts with NDC80; indicative for an association with the NDC80 complex. Overexpressed in hepatomas and colonic tumors. Also expressed in skeletal muscle, brain, heart, placenta, lung, liver, kidney and pancreas. Expression is elevated in the brain; highly expressed in the Purkinje cell bodies of the cerebellum.

The protein resides in the cytoplasm. It localises to the cytoskeleton. It is found in the microtubule organizing center. Its subcellular location is the centrosome. The protein localises to the spindle pole. The protein resides in the spindle. It localises to the chromosome. It is found in the centromere. Its subcellular location is the kinetochore. Functionally, binds to the plus end of microtubules and regulates microtubule dynamics and microtubule organization. Acts as a processive microtubule polymerase. Promotes cytoplasmic microtubule nucleation and elongation. Plays a major role in organizing spindle poles. In spindle formation protects kinetochore microtubules from depolymerization by KIF2C and has an essential role in centrosomal microtubule assembly independently of KIF2C activity. Contributes to centrosome integrity. Acts as a component of the TACC3/ch-TOG/clathrin complex proposed to contribute to stabilization of kinetochore fibers of the mitotic spindle by acting as inter-microtubule bridge. The TACC3/ch-TOG/clathrin complex is required for the maintenance of kinetochore fiber tension. Enhances the strength of NDC80 complex-mediated kinetochore-tip microtubule attachments. The chain is Cytoskeleton-associated protein 5 (CKAP5) from Homo sapiens (Human).